Here is a 328-residue protein sequence, read N- to C-terminus: Olfactory receptor 2AJ1 (328 aa).

The Extracellular segment spans residues 1 to 25; that stretch reads MGHQNHTFSSDFILLGLFSSSPTSV. A glycan (N-linked (GlcNAc...) asparagine) is linked at N5. Residues 26-49 form a helical membrane-spanning segment; it reads VFFLVLFVIFIMSVTENTLMILLI. At 50 to 57 the chain is on the cytoplasmic side; sequence RSDSRLHT. Residues 58 to 79 form a helical membrane-spanning segment; it reads PMYFLLSHLSLMDILHVSNIVP. Topologically, residues 80-100 are extracellular; sequence KMVTNFLSGSRTISFAGCGFQ. The cysteines at positions 97 and 189 are disulfide-linked. Residues 101 to 120 traverse the membrane as a helical segment; that stretch reads VFLSLTLLGGECLLLAAMSC. Residues 121–139 are Cytoplasmic-facing; sequence DRYVAICHPLRYPILMKEY. A helical transmembrane segment spans residues 140-158; the sequence is ASALMAGGSWLIGVFNSTV. The Extracellular segment spans residues 159-195; that stretch reads HTAYALQFPFCGSRAIDHFFCEVPAMLKLSCADTTRY. The helical transmembrane segment at 196–219 threads the bilayer; that stretch reads ERGVCVSAVIFLLIPFSLISASYG. Over 220 to 236 the chain is Cytoplasmic; the sequence is QIILTVLQMKSSEARKK. A helical membrane pass occupies residues 237–259; sequence SFSTCSFHMIVVTMYYGPFIFTY. Over 260–272 the chain is Extracellular; that stretch reads MRPKSYHTPGQDK. Residues 273–292 traverse the membrane as a helical segment; the sequence is FLAIFYTILTPTLNPFIYSF. The Cytoplasmic portion of the chain corresponds to 293 to 328; it reads RNKDVLAVMKNMLKSNFLHKKMNRKIPECVFCLFLC.

Belongs to the G-protein coupled receptor 1 family.

It localises to the cell membrane. Its function is as follows. Odorant receptor. The sequence is that of Olfactory receptor 2AJ1 (OR2AJ1) from Homo sapiens (Human).